Consider the following 394-residue polypeptide: Phosphopentomutase (394 aa).

6 residues coordinate Mn(2+): D13, D286, H291, D327, H328, and H339.

Belongs to the phosphopentomutase family. Mn(2+) serves as cofactor.

The protein localises to the cytoplasm. It carries out the reaction 2-deoxy-alpha-D-ribose 1-phosphate = 2-deoxy-D-ribose 5-phosphate. The catalysed reaction is alpha-D-ribose 1-phosphate = D-ribose 5-phosphate. The protein operates within carbohydrate degradation; 2-deoxy-D-ribose 1-phosphate degradation; D-glyceraldehyde 3-phosphate and acetaldehyde from 2-deoxy-alpha-D-ribose 1-phosphate: step 1/2. In terms of biological role, isomerase that catalyzes the conversion of deoxy-ribose 1-phosphate (dRib-1-P) and ribose 1-phosphate (Rib-1-P) to deoxy-ribose 5-phosphate (dRib-5-P) and ribose 5-phosphate (Rib-5-P), respectively. The sequence is that of Phosphopentomutase from Bacillus cereus (strain G9842).